An 868-amino-acid polypeptide reads, in one-letter code: Aconitate hydratase B (868 aa).

Residues R192, 235-237 (SSR), 404-406 (QDT), and S488 each bind substrate. 3 residues coordinate [4Fe-4S] cluster: C700, C758, and C761. R780 and R785 together coordinate substrate.

It belongs to the aconitase/IPM isomerase family. In terms of assembly, monomer. The cofactor is [4Fe-4S] cluster.

The catalysed reaction is citrate = D-threo-isocitrate. It carries out the reaction (2S,3R)-3-hydroxybutane-1,2,3-tricarboxylate = 2-methyl-cis-aconitate + H2O. It functions in the pathway carbohydrate metabolism; tricarboxylic acid cycle; isocitrate from oxaloacetate: step 2/2. It participates in organic acid metabolism; propanoate degradation. Its function is as follows. Involved in the catabolism of short chain fatty acids (SCFA) via the tricarboxylic acid (TCA)(acetyl degradation route) and probably via the 2-methylcitrate cycle I (propionate degradation route). Catalyzes the reversible isomerization of citrate to isocitrate via cis-aconitate. Catalyzes the hydration of 2-methyl-cis-aconitate to yield (2R,3S)-2-methylisocitrate. The apo form of AcnB functions as a RNA-binding regulatory protein. In Synechocystis sp. (strain ATCC 27184 / PCC 6803 / Kazusa), this protein is Aconitate hydratase B (acnB).